Consider the following 458-residue polypeptide: Alpha-2C adrenergic receptor (458 aa).

Residues 1–51 are Extracellular-facing; sequence MASPALAAALAAAAAEGPNGSDAGEWGSGGGANASGTDWVPPPGQYSAGAV. 2 N-linked (GlcNAc...) asparagine glycosylation sites follow: Asn19 and Asn33. The chain crosses the membrane as a helical span at residues 52 to 76; it reads AGLAAVVGFLIVFTVVGNVLVVIAV. Residues 77 to 88 lie on the Cytoplasmic side of the membrane; the sequence is LTSRALRAPQNL. The helical transmembrane segment at 89–114 threads the bilayer; it reads FLVSLASADILVATLVMPFSLANELM. The Extracellular segment spans residues 115–124; the sequence is AYWYFGQVWC. Cys124 and Cys202 are joined by a disulfide. A helical membrane pass occupies residues 125 to 147; it reads GVYLALDVLFCTSSIVHLCAISL. Residues 148 to 168 are Cytoplasmic-facing; it reads DRYWSVTQAVEYNLKRTPRRV. Residues 169-191 traverse the membrane as a helical segment; sequence KATIVAVWLISAVISFPPLVSFY. The Extracellular segment spans residues 192 to 207; sequence RRPDGAAYPQCGLNDE. The chain crosses the membrane as a helical span at residues 208 to 231; that stretch reads TWYILSSCIGSFFAPCLIMGLVYA. The Cytoplasmic segment spans residues 232–379; that stretch reads RIYRVAKLRT…QAREKRFTFV (148 aa). The disordered stretch occupies residues 245–343; sequence SEKRGPAGPD…SPGPGGRLSR (99 aa). Basic residues predominate over residues 291–303; it reads RRRRRGALRRGGR. The chain crosses the membrane as a helical span at residues 380–403; it reads LAVVMGVFVLCWFPFFFSYSLYGI. At 404–416 the chain is on the extracellular side; that stretch reads CREACQLPEPLFK. A helical membrane pass occupies residues 417–437; sequence FFFWIGYCNSSLNPVIYTVFN. Residues 438-458 lie on the Cytoplasmic side of the membrane; sequence QDFRRSFKHILFRRRRRGFRQ.

It belongs to the G-protein coupled receptor 1 family. Adrenergic receptor subfamily. ADRA2C sub-subfamily.

Its subcellular location is the cell membrane. Alpha-2 adrenergic receptors mediate the catecholamine-induced inhibition of adenylate cyclase through the action of G proteins. The sequence is that of Alpha-2C adrenergic receptor (Adra2c) from Mus musculus (Mouse).